The sequence spans 299 residues: MADKKLVVVFGATGAQGGSVARTLLEDGTFRVRVVTRDPGQRAAKQLRLQGAEVVQGDQDDEASMELALSGAHATFIVTNYWENCSQEQEVKQGKLLADLAKRLGLRYVVYSGLENIKKLTAGRLTVGHFDGKGEVEEYFRDIGVPMTSVRLPCYFENLLSYFLPQKAPDGRSYLLSLPMGDVPIDGMSVADLGPVVLSLLKTPEEYVGRNIGLSTCRHTVEEYAALLTKHTGKAVRDAKTSPEDYEKLGFPGAQDLANMFRFYALKPDRNIELTLKLNPKARRLDQWLEQHKEDFAGL.

NADP(+) contacts are provided by residues 11–16 (GATGAQ), 37–41 (RDPGQ), 58–59 (DQ), 79–81 (TNY), lysine 92, lysine 133, and 155–158 (YFEN). An interaction with ASS1 region spans residues 153–189 (PCYFENLLSYFLPQKAPDGRSYLLSLPMGDVPIDGMS).

This sequence belongs to the NmrA-type oxidoreductase family. Homodimer. Interacts with ASS1. Interaction is enhanced by low NADPH/NADP(+) ratios, which results in inhibition of ASS1 activity.

Its subcellular location is the cytoplasm. It is found in the perinuclear region. It localises to the nucleus. Redox sensor protein. Undergoes restructuring and subcellular redistribution in response to changes in intracellular NADPH/NADP(+) levels. At low NADPH concentrations the protein is found mainly as a monomer, and binds argininosuccinate synthase (ASS1), the enzyme involved in nitric oxide synthesis. Association with ASS1 impairs its activity and reduces the production of nitric oxide, which subsecuently prevents apoptosis. Under normal NADPH concentrations, the protein is found as a dimer and hides the binding site for ASS1. The homodimer binds one molecule of NADPH. Has higher affinity for NADPH than for NADP(+). Binding to NADPH is necessary to form a stable dimer. The chain is NmrA-like family domain-containing protein 1 (NMRAL1) from Bos taurus (Bovine).